Here is a 109-residue protein sequence, read N- to C-terminus: MTDFKRIPPEQAHAMRNAGAVIVDIRDPHSFANGHISGSRHLDNHSLPDFIAAADLDHPLIVTCYHGHSSQSAAAYLVNQGFSEVYSLDGGFELWRHTYPSDVEHDEQQ.

Residues 16–104 form the Rhodanese domain; it reads RNAGAVIVDI…WRHTYPSDVE (89 aa). Cysteine 64 (cysteine persulfide intermediate) is an active-site residue.

This sequence belongs to the GlpE family.

The protein localises to the cytoplasm. It catalyses the reaction thiosulfate + hydrogen cyanide = thiocyanate + sulfite + 2 H(+). The enzyme catalyses thiosulfate + [thioredoxin]-dithiol = [thioredoxin]-disulfide + hydrogen sulfide + sulfite + 2 H(+). Its function is as follows. Transferase that catalyzes the transfer of sulfur from thiosulfate to thiophilic acceptors such as cyanide or dithiols. May function in a CysM-independent thiosulfate assimilation pathway by catalyzing the conversion of thiosulfate to sulfite, which can then be used for L-cysteine biosynthesis. This chain is Thiosulfate sulfurtransferase GlpE, found in Stutzerimonas stutzeri (strain A1501) (Pseudomonas stutzeri).